Reading from the N-terminus, the 343-residue chain is Phosphatidylglycerol--prolipoprotein diacylglyceryl transferase (343 aa).

4 helical membrane-spanning segments follow: residues Ile-22 to Gly-42, Gly-54 to Tyr-74, Val-97 to Ile-117, and Gly-123 to Ile-143. A 1,2-diacyl-sn-glycero-3-phospho-(1'-sn-glycerol) is bound at residue Arg-145. The next 2 helical transmembrane spans lie at Val-193–Ile-213 and Val-257–Pro-277. Residues Pro-283–Lys-343 are disordered. Positions Gly-295 to Asp-325 are enriched in acidic residues.

This sequence belongs to the Lgt family.

It localises to the cell membrane. The enzyme catalyses L-cysteinyl-[prolipoprotein] + a 1,2-diacyl-sn-glycero-3-phospho-(1'-sn-glycerol) = an S-1,2-diacyl-sn-glyceryl-L-cysteinyl-[prolipoprotein] + sn-glycerol 1-phosphate + H(+). It functions in the pathway protein modification; lipoprotein biosynthesis (diacylglyceryl transfer). Functionally, catalyzes the transfer of the diacylglyceryl group from phosphatidylglycerol to the sulfhydryl group of the N-terminal cysteine of a prolipoprotein, the first step in the formation of mature lipoproteins. The chain is Phosphatidylglycerol--prolipoprotein diacylglyceryl transferase from Mycobacteroides abscessus (strain ATCC 19977 / DSM 44196 / CCUG 20993 / CIP 104536 / JCM 13569 / NCTC 13031 / TMC 1543 / L948) (Mycobacterium abscessus).